The sequence spans 475 residues: E3 ubiquitin-protein ligase TRIM21 (475 aa).

The RING-type zinc finger occupies Cys-16–Arg-55. Positions 92, 95, 114, and 120 each coordinate Zn(2+). The segment at Cys-92–His-123 adopts a B box-type zinc-finger fold. The stretch at Leu-128–Ser-238 forms a coiled coil. At Ser-266 the chain carries Phosphoserine. The B30.2/SPRY domain maps to Glu-268–Leu-465.

Belongs to the TRIM/RBCC family. In terms of assembly, homotrimer. Interacts (via C-terminus) with IRF8 (via C-terminus). Component of a SCF(SKP2)-like complex containing CUL1, SKP1, TRIM21 and SKP2. Interacts with CALR, CUL1, FBXW11, HSPA5, IKBKB, IRF3, SKP1 and VCP. Interacts with SKP2; the interaction with SKP2 does not depend on an intact F-box domain. Interacts (via N-terminus and C-terminus) with DCP2 (via N-terminus and C-terminus). Interacts with ULK1, BECN1 and with ATG8 family members, including GABARAP, GABARAPL1, GABARAPL2 and MAP1LC3C/LC3C. Interacts with TRIM21 and SQSTM1/sequestosome 1. Interacts with IRF3. Interacts (via the SPRY domain) with NMI (via coiled-coil domain); the interaction promotes 'Lys-63'-linked ubiquitination of NMI. Interacts with IFI35 and NMI; the interaction facilitates NMI-IFI35 complex formation. As to quaternary structure, (Microbial infection) Interacts (via B30.2/SPRY domain) with severe fever with thrombocytopenia syndrome virus (SFTSV) NSs; this interaction activates NFE2L2-mediated transcriptional activation of antioxidant genes. In terms of processing, autoubiquitinated; does not lead to its proteasomal degradation. Deubiquitinated by USP4; leading to its stabilization. As to expression, isoform 1 and isoform 2 are expressed in fetal and adult heart and fetal lung.

It localises to the cytoplasm. It is found in the cytoplasmic vesicle. Its subcellular location is the autophagosome. The protein localises to the nucleus. The protein resides in the P-body. It localises to the stress granule. The enzyme catalyses S-ubiquitinyl-[E2 ubiquitin-conjugating enzyme]-L-cysteine + [acceptor protein]-L-lysine = [E2 ubiquitin-conjugating enzyme]-L-cysteine + N(6)-ubiquitinyl-[acceptor protein]-L-lysine.. Its pathway is protein modification; protein ubiquitination. Functionally, E3 ubiquitin-protein ligase whose activity is dependent on E2 enzymes, UBE2D1, UBE2D2, UBE2E1 and UBE2E2. Forms a ubiquitin ligase complex in cooperation with the E2 UBE2D2 that is used not only for the ubiquitination of USP4 and IKBKB but also for its self-ubiquitination. Component of cullin-RING-based SCF (SKP1-CUL1-F-box protein) E3 ubiquitin-protein ligase complexes such as SCF(SKP2)-like complexes. A TRIM21-containing SCF(SKP2)-like complex is shown to mediate ubiquitination of CDKN1B ('Thr-187' phosphorylated-form), thereby promoting its degradation by the proteasome. Monoubiquitinates IKBKB that will negatively regulates Tax-induced NF-kappa-B signaling. Negatively regulates IFN-beta production post-pathogen recognition by catalyzing polyubiquitin-mediated degradation of IRF3. Mediates the ubiquitin-mediated proteasomal degradation of IgG1 heavy chain, which is linked to the VCP-mediated ER-associated degradation (ERAD) pathway. Promotes IRF8 ubiquitination, which enhanced the ability of IRF8 to stimulate cytokine genes transcription in macrophages. Plays a role in the regulation of the cell cycle progression. Enhances the decapping activity of DCP2. Exists as a ribonucleoprotein particle present in all mammalian cells studied and composed of a single polypeptide and one of four small RNA molecules. At least two isoforms are present in nucleated and red blood cells, and tissue specific differences in RO/SSA proteins have been identified. The common feature of these proteins is their ability to bind HY RNAs.2. Involved in the regulation of innate immunity and the inflammatory response in response to IFNG/IFN-gamma. Organizes autophagic machinery by serving as a platform for the assembly of ULK1, Beclin 1/BECN1 and ATG8 family members and recognizes specific autophagy targets, thus coordinating target recognition with assembly of the autophagic apparatus and initiation of autophagy. Also regulates autophagy through FIP200/RB1CC1 ubiquitination and subsequent decreased protein stability. Represses the innate antiviral response by facilitating the formation of the NMI-IFI35 complex through 'Lys-63'-linked ubiquitination of NMI. During viral infection, promotes cell pyroptosis by mediating 'Lys-6'-linked ubiquitination of ISG12a/IFI27, facilitating its translocation into the mitochondria and subsequent CASP3 activation. When up-regulated through the IFN/JAK/STAT signaling pathway, promotes 'Lys-27'-linked ubiquitination of MAVS, leading to the recruitment of TBK1 and up-regulation of innate immunity. Mediates 'Lys-63'-linked polyubiquitination of G3BP1 in response to heat shock, leading to stress granule disassembly. The protein is E3 ubiquitin-protein ligase TRIM21 of Homo sapiens (Human).